A 161-amino-acid chain; its full sequence is Cyclin-dependent protein kinase inhibitor SMR12 (161 aa).

The span at E84–N93 shows a compositional bias: acidic residues. The segment at E84–I106 is disordered.

In terms of biological role, probable cyclin-dependent protein kinase (CDK) inhibitor that functions as a repressor of mitosis in the endoreduplication cell cycle. The protein is Cyclin-dependent protein kinase inhibitor SMR12 of Arabidopsis thaliana (Mouse-ear cress).